The chain runs to 253 residues: Ribosome-inactivating protein saporin-9 (253 aa).

The active site involves Glu176.

The enzyme catalyses Endohydrolysis of the N-glycosidic bond at one specific adenosine on the 28S rRNA.. Its function is as follows. Ribosome-inactivating protein of type 1, inhibits protein synthesis in animal cells. In Saponaria officinalis (Common soapwort), this protein is Ribosome-inactivating protein saporin-9 (SAP9).